The following is a 372-amino-acid chain: GTPase Obg (372 aa).

The Obg domain occupies 1–159; it reads MKFIDEARIE…RMLKLELKVL (159 aa). Positions 128-147 are disordered; sequence LHFKSSTNRAPRQKTDGKPG. The region spanning 160–334 is the OBG-type G domain; the sequence is ADVGLLGMPN…LVYAIYDYLA (175 aa). GTP-binding positions include 166–173, 191–195, 213–216, 284–287, and 315–317; these read GMPNAGKS, FTTLA, DIPG, NKLD, and SAL. Mg(2+) contacts are provided by serine 173 and threonine 193.

Belongs to the TRAFAC class OBG-HflX-like GTPase superfamily. OBG GTPase family. In terms of assembly, monomer. Mg(2+) is required as a cofactor.

Its subcellular location is the cytoplasm. An essential GTPase which binds GTP, GDP and possibly (p)ppGpp with moderate affinity, with high nucleotide exchange rates and a fairly low GTP hydrolysis rate. Plays a role in control of the cell cycle, stress response, ribosome biogenesis and in those bacteria that undergo differentiation, in morphogenesis control. The protein is GTPase Obg of Burkholderia thailandensis (strain ATCC 700388 / DSM 13276 / CCUG 48851 / CIP 106301 / E264).